Here is a 295-residue protein sequence, read N- to C-terminus: Protease HtpX (295 aa).

2 helical membrane passes run 5–25 (VILFLATNLAVLLVLSISMRL) and 43–63 (ALLIFAAIIGFSGSLISLAIS). A Zn(2+)-binding site is contributed by H148. Residue E149 is part of the active site. H152 serves as a coordination point for Zn(2+). Transmembrane regions (helical) follow at residues 159–179 (VTLALIQGVVNTFVIFLARII) and 198–218 (FFITTLIAQTVLAILASLIVL). E225 is a Zn(2+) binding site.

The protein belongs to the peptidase M48B family. The cofactor is Zn(2+).

It localises to the cell inner membrane. This chain is Protease HtpX, found in Nitrosococcus oceani (strain ATCC 19707 / BCRC 17464 / JCM 30415 / NCIMB 11848 / C-107).